The sequence spans 78 residues: Major outer membrane lipoprotein Lpp (78 aa).

The N-terminal stretch at 1–20 (MNRTKLVLGAVILGSTLLAG) is a signal peptide. Cys-21 is lipidated: N-palmitoyl cysteine. Residue Cys-21 is the site of S-diacylglycerol cysteine attachment. Residues 22 to 75 (SSNAKIDQLSTDVQTLNAKVDQLSNDVTAIRSDVQAAKDDAARANQRLDNQAHS) are a coiled coil. 2 consecutive repeats follow at residues 24–34 (NAKIDQLSTDV) and 38–48 (NAKVDQLSNDV). Lys-78 is modified (N6-murein peptidoglycan lysine).

It belongs to the Lpp family. As to quaternary structure, homotrimer.

Its subcellular location is the cell outer membrane. It is found in the secreted. It localises to the cell wall. In terms of biological role, a highly abundant outer membrane lipoprotein that controls the distance between the inner and outer membranes. The only protein known to be covalently linked to the peptidoglycan network (PGN). Also non-covalently binds the PGN. The link between the cell outer membrane and PGN contributes to maintenance of the structural and functional integrity of the cell envelope, and maintains the correct distance between the PGN and the outer membrane. This Erwinia amylovora (Fire blight bacteria) protein is Major outer membrane lipoprotein Lpp.